A 1060-amino-acid polypeptide reads, in one-letter code: Bumetanide-sensitive sodium-(potassium)-chloride cotransporter (1060 aa).

The Cytoplasmic segment spans residues 1-122 (MNDENRFNVS…KSPTPAVGIK (122 aa)). 2 consecutive transmembrane segments (helical) span residues 123-143 (LGWIQGVFIPCLLNIWGVMLF) and 154-174 (GIGLSLVIIAISAIVCVITTL). At 175–197 (SMSAICTNGEVKGGGIYYIISRS) the chain is on the cytoplasmic side. The next 2 membrane-spanning stretches (helical) occupy residues 198-218 (LGPEFGASVGIIFAFANAVAA) and 250-270 (IVGTVALLVMCIICAIGMDWE). The Cytoplasmic portion of the chain corresponds to 271-275 (SKAQN). Transmembrane regions (helical) follow at residues 276–296 (FLIAIIVGAMVDFVVGTIMGP) and 332–352 (FFSVFAIFFPSVTGIQAGANI). The Cytoplasmic portion of the chain corresponds to 353 to 367 (SGDLKDPASAIPKGT). A helical membrane pass occupies residues 368 to 388 (LLALLISMVSYTLMVLFAGGG). Residues asparagine 396, asparagine 404, and asparagine 419 are each glycosylated (N-linked (GlcNAc...) asparagine). The chain crosses the membrane as a helical span at residues 432–452 (VMQLMSAWGPFIYGGCWAATL). At 453-497 (STALTNLLSVPRLIQALGVDRIYPGLIFFSKPYGRHGEPYRGYVL) the chain is on the cytoplasmic side. The next 2 membrane-spanning stretches (helical) occupy residues 498–518 (TFFVSLLFLLIADLNTIAPLI) and 563–583 (CVAIMLLVHWVMSLVTFAIFF). At 584–642 (TLYLIVHYRRPDVNWGSSTQAQMYKTALSSAHALARTGEHVKNYWPQLLVLAGRPQARP) the chain is on the cytoplasmic side. Residues 643 to 663 (ALVDLGNLISKAGSLMIVGDI) form a helical membrane-spanning segment. N-linked (GlcNAc...) asparagine glycosylation is present at asparagine 816. A helical membrane pass occupies residues 882 to 902 (TLDVWWLYDDGGLTILLPYII). Residues 903–1060 (SQRSAWANCK…NHTSVLTFYS (158 aa)) lie on the Cytoplasmic side of the membrane.

Belongs to the SLC12A transporter family.

It localises to the membrane. Its function is as follows. Electrically silent transporter system. Mediates sodium and chloride reabsorption. Plays a vital role in the regulation of ionic balance and cell volume. The protein is Bumetanide-sensitive sodium-(potassium)-chloride cotransporter of Manduca sexta (Tobacco hawkmoth).